The following is a 323-amino-acid chain: MFKKLITTPFFSPNKQFITFQLESGKRNYFSNNKIQLHGGSGHRQPQVTKVAIEGIKNIIAVSSAKGGVGKSTCAVNIALGLSSHNLSVGLLDVDVFGPSIPLMMDLKNHEKPFTNELNQMIPLQNYGIKCMSMGFLVNEDDPIIWRGPMVGSALEKLLRQTDWGHLDVLVCDLPPGTGDAILTMCQRVPLTGAVIVSTPQDVALADVVRGVNMFKKVEVPILGLVENMSYFNCPHCNESTHIFGNEGAKNTAKKMGINFLGDVPIHLQIRETSDSGKPITVTQPDSPQAKNYKDISKEIIKQLEIINNDENKDNKEPNIIIT.

Position 65-72 (65-72) interacts with ATP; that stretch reads AKGGVGKS.

Belongs to the Mrp/NBP35 ATP-binding proteins family. [4Fe-4S] cluster serves as cofactor.

The protein localises to the mitochondrion. Iron-sulfur cluster transfer protein involved in the assembly of the mitochondrial membrane respiratory chain NADH dehydrogenase (Complex I). May deliver one or more Fe-S clusters to complex I subunits. The chain is Iron-sulfur cluster transfer protein NUBPL (nubpl) from Dictyostelium discoideum (Social amoeba).